Here is a 155-residue protein sequence, read N- to C-terminus: Ribosomal RNA large subunit methyltransferase H (155 aa).

S-adenosyl-L-methionine-binding positions include G104 and 123 to 128 (LSRLTL).

It belongs to the RNA methyltransferase RlmH family. In terms of assembly, homodimer.

Its subcellular location is the cytoplasm. The catalysed reaction is pseudouridine(1915) in 23S rRNA + S-adenosyl-L-methionine = N(3)-methylpseudouridine(1915) in 23S rRNA + S-adenosyl-L-homocysteine + H(+). Specifically methylates the pseudouridine at position 1915 (m3Psi1915) in 23S rRNA. This Marinomonas sp. (strain MWYL1) protein is Ribosomal RNA large subunit methyltransferase H.